The following is a 227-amino-acid chain: Cytidylate kinase (227 aa).

Gly-12 to Thr-20 serves as a coordination point for ATP.

This sequence belongs to the cytidylate kinase family. Type 1 subfamily.

It localises to the cytoplasm. It carries out the reaction CMP + ATP = CDP + ADP. The catalysed reaction is dCMP + ATP = dCDP + ADP. This Erwinia tasmaniensis (strain DSM 17950 / CFBP 7177 / CIP 109463 / NCPPB 4357 / Et1/99) protein is Cytidylate kinase.